A 525-amino-acid polypeptide reads, in one-letter code: Glutamate--cysteine ligase (525 aa).

This sequence belongs to the glutamate--cysteine ligase type 1 family. Type 1 subfamily.

It catalyses the reaction L-cysteine + L-glutamate + ATP = gamma-L-glutamyl-L-cysteine + ADP + phosphate + H(+). The protein operates within sulfur metabolism; glutathione biosynthesis; glutathione from L-cysteine and L-glutamate: step 1/2. The sequence is that of Glutamate--cysteine ligase from Pseudomonas putida (strain ATCC 47054 / DSM 6125 / CFBP 8728 / NCIMB 11950 / KT2440).